The primary structure comprises 168 residues: Phosphopantetheine adenylyltransferase (168 aa).

Thr14 contacts substrate. ATP-binding positions include 14-15 (TF) and His22. Substrate is bound by residues Lys46, Leu78, and Arg92. Residues 93-95 (GLR), Glu103, and 128-134 (YSFISSS) contribute to the ATP site.

It belongs to the bacterial CoaD family. In terms of assembly, homohexamer. Mg(2+) serves as cofactor.

The protein resides in the cytoplasm. The catalysed reaction is (R)-4'-phosphopantetheine + ATP + H(+) = 3'-dephospho-CoA + diphosphate. It participates in cofactor biosynthesis; coenzyme A biosynthesis; CoA from (R)-pantothenate: step 4/5. In terms of biological role, reversibly transfers an adenylyl group from ATP to 4'-phosphopantetheine, yielding dephospho-CoA (dPCoA) and pyrophosphate. This Xanthomonas campestris pv. campestris (strain 8004) protein is Phosphopantetheine adenylyltransferase.